Here is a 767-residue protein sequence, read N- to C-terminus: Two-component response regulator-like PRR73 (767 aa).

Residues 1-64 (MGSACEAGTD…EPQQTDEQKE (64 aa)) are disordered. One can recognise a Response regulatory domain in the interval 82–200 (RVLLVENDDS…ELKNLWQHVW (119 aa)). The segment covering 205–214 (SSSGSGSESG) has biased composition (low complexity). Disordered regions lie at residues 205–272 (SSSG…QSSW), 312–388 (RWLP…NEPT), 476–546 (ASNQ…RGKV), 646–701 (ANYS…SGSG), and 727–767 (NFGK…DEDR). The segment covering 238-252 (DNEDDDDNDEDDDDL) has biased composition (acidic residues). 3 stretches are compositionally biased toward polar residues: residues 263 to 272 (DNGSGTQSSW), 343 to 361 (RNSS…VNPT), and 488 to 497 (CSPQDNSSEA). Positions 518–531 (GSNGSSNNNDMGSS) are enriched in low complexity. A compositionally biased stretch (polar residues) spans 532–543 (TKNAITKPSSNR). Residues 689 to 700 (GAGGGNGSGSGS) are compositionally biased toward gly residues. A CCT domain is found at 712–754 (REAALNKFRQKRKVRNFGKKVRYQSRKRLAEQRPRIRGQFVRQ). The segment covering 727 to 738 (NFGKKVRYQSRK) has biased composition (basic residues).

The protein belongs to the ARR-like family.

Its subcellular location is the nucleus. Its function is as follows. Controls photoperiodic flowering response. Seems to be one of the component of the circadian clock. Expression of several members of the ARR-like family is controlled by circadian rhythm. The particular coordinated sequential expression of PRR73, PRR37, PRR95, PRR59 and PPR1 result to circadian waves that may be at the basis of the endogenous circadian clock. In Oryza sativa subsp. japonica (Rice), this protein is Two-component response regulator-like PRR73 (PRR73).